The following is a 447-amino-acid chain: MARKSSLLKRAAIAVVSVIAIYVILNASVSRSLPSSSDLPRQLIREDDDDEGRAPIQPRVRVYMYNLPKRFTYGLIEQHSIARGGIKKPVGDVTTLKYPGHQHMHEWYLFSDLNQPEVDRSGSPIVRVSDPADADLFYVPVFSSLSLIVNAGRPVEAGSGYSDEKMQEGLVEWLEGQEWWRRNAGRDHVIPAGDPNALYRILDRVKNAVLLVSDFGRLRPDQGSFVKDVVIPYSHRVNLFNGEIGVEDRNTLLFFMGNRYRKDGGKVRDLLFQVLEKEDDVTIKHGTQSRENRRAATKGMHTSKFCLNPAGDTPSACRLFDSIVSLCVPLIVSDSIELPFEDVIDYRKFSIFVEANAALQPGFLVQMLRKIKTKKILEYQREMKSVRRYFDYDNPNGAVKEIWRQVSHKLPLIKLMSNRDRRLVLRNLTEPNCSCLCTNQTGLITSI.

The Cytoplasmic segment spans residues 1 to 6; the sequence is MARKSS. Residues 7–29 form a helical; Signal-anchor for type II membrane protein membrane-spanning segment; that stretch reads LLKRAAIAVVSVIAIYVILNASV. Over 30-447 the chain is Lumenal; that stretch reads SRSLPSSSDL…TNQTGLITSI (418 aa). Over residues 32-41 the composition is skewed to low complexity; it reads SLPSSSDLPR. Positions 32-52 are disordered; it reads SLPSSSDLPRQLIREDDDDEG. N-linked (GlcNAc...) asparagine glycosylation is found at Asn427, Asn432, and Asn439.

Belongs to the glycosyltransferase 47 family. In terms of assembly, homodimer and heterodimer with ARAD2. As to expression, expressed in root vasculature, cotyledons, leaves, stems, vascular tissue of sepals, petals and stamens, pollen grains, mature siliques and abscission region of seeds.

It localises to the golgi apparatus membrane. Probable arabinosyl transferase responsible for the polymerization of arabinose into the arabinan of arabinogalactan. May function as inverting enzyme using UDP-beta-L-arabinopyranoside. May be important for arabinan side chains of rhamnogalacturonan I (RG-I), a major component of pectins. Cell wall pectic arabinans are involved in thigmomorphogenesis response of inflorescence stems to mechanical stress. This chain is Probable arabinosyltransferase ARAD1 (ARAD1), found in Arabidopsis thaliana (Mouse-ear cress).